A 688-amino-acid chain; its full sequence is MAKNFLIELGTEELPPTALRSLAEAFASNFEAELKAADLAHQGVKWYATPRRLALKVAELAESQADKVVEKRGPAVSAAFDADGNPTKAAQGWARGNGITVEQADRLKTDKGEWLLHKEEVKGKPVQELVVDFAAKALAGLPIPKAMRWGNSDIQFIRPVKTLTILLGDELIEGSILGVSSARTLRGHRFMGESEFTIDSADQYPAILEERGKVMADYDARKAIILADSEKAAAAVGGKADLEDDLVEEVTSLVEWPVVLTAKFEEEFLKVPSEALVYTMKGDQKYFPVYDENKKLLPNFIFVSNIESKEPRHVIEGNEKVVRPRLADAEFFFNTDRKRPLIDRLPELEQAIFQKQLGTIKDKTDRITELAGYIAEQIGADVEKSQRAGLLAKCDLMTSMVFEFTDTQGVMGMHYATHDGEDEQVALALYEQYMPRFAGDDLPSTDISSAVAMADKLDTLVGIFGIGQAPKGSDPFALRRAALGVLRIIVEKEYNLDLVDLVAKAQSLFGDKLSNANVATDVIDFMLGRFRAWYQDEGFSVDIIQAVLARRPTKPADFDKRVKAVSHFRELDAAESLAAANKRVGNILAKFDGELAQEIDLALLQEDAEKALAEKVEILAEALEPVFAAGNYQEALSRLAELREPVDAFFDNVMVMADDEALKTNRLTLLNKLRNLFLDIADISLLQK.

It belongs to the class-II aminoacyl-tRNA synthetase family. As to quaternary structure, tetramer of two alpha and two beta subunits.

It localises to the cytoplasm. It carries out the reaction tRNA(Gly) + glycine + ATP = glycyl-tRNA(Gly) + AMP + diphosphate. In Aliivibrio fischeri (strain ATCC 700601 / ES114) (Vibrio fischeri), this protein is Glycine--tRNA ligase beta subunit.